The following is a 428-amino-acid chain: Anaerobic glycerol-3-phosphate dehydrogenase subunit B (428 aa).

This sequence belongs to the anaerobic G-3-P dehydrogenase subunit B family. In terms of assembly, composed of a catalytic GlpA/B dimer and of membrane bound GlpC. The cofactor is FMN.

The enzyme catalyses a quinone + sn-glycerol 3-phosphate = dihydroxyacetone phosphate + a quinol. Its pathway is polyol metabolism; glycerol degradation via glycerol kinase pathway; glycerone phosphate from sn-glycerol 3-phosphate (anaerobic route): step 1/1. Functionally, conversion of glycerol 3-phosphate to dihydroxyacetone. Uses fumarate or nitrate as electron acceptor. The sequence is that of Anaerobic glycerol-3-phosphate dehydrogenase subunit B from Actinobacillus pleuropneumoniae serotype 5b (strain L20).